The following is a 313-amino-acid chain: Protoheme IX farnesyltransferase (313 aa).

8 consecutive transmembrane segments (helical) span residues 32 to 52, 53 to 73, 120 to 140, 153 to 173, 180 to 200, 226 to 246, 248 to 268, and 284 to 304; these read VMSL…GDFH, PVLA…AGAL, VLVN…YVVI, IVIG…AVTG, LLLF…LALF, ILLY…LGYF, AVYG…AIRV, and LFKF…IEVV.

Belongs to the UbiA prenyltransferase family. Protoheme IX farnesyltransferase subfamily.

It is found in the cell inner membrane. The enzyme catalyses heme b + (2E,6E)-farnesyl diphosphate + H2O = Fe(II)-heme o + diphosphate. Its pathway is porphyrin-containing compound metabolism; heme O biosynthesis; heme O from protoheme: step 1/1. In terms of biological role, converts heme B (protoheme IX) to heme O by substitution of the vinyl group on carbon 2 of heme B porphyrin ring with a hydroxyethyl farnesyl side group. This chain is Protoheme IX farnesyltransferase, found in Rhodopseudomonas palustris (strain BisB5).